A 444-amino-acid chain; its full sequence is UDP-N-acetylmuramate--L-alanine ligase (444 aa).

Glycine 110–serine 116 serves as a coordination point for ATP.

It belongs to the MurCDEF family.

It is found in the cytoplasm. The catalysed reaction is UDP-N-acetyl-alpha-D-muramate + L-alanine + ATP = UDP-N-acetyl-alpha-D-muramoyl-L-alanine + ADP + phosphate + H(+). It participates in cell wall biogenesis; peptidoglycan biosynthesis. Its function is as follows. Cell wall formation. The sequence is that of UDP-N-acetylmuramate--L-alanine ligase from Streptococcus sanguinis (strain SK36).